Consider the following 406-residue polypeptide: Probable peptidoglycan glycosyltransferase FtsW (406 aa).

9 helical membrane-spanning segments follow: residues 22–42 (LWFVMSLIAILALGIVMVASA), 56–76 (FFMGRQILYLILGVSFGFMML), 86–106 (WGILLMLLSLVLLVLVLVPGI), 116–136 (WINLIVFNLQASEVAKVCMVV), 153–173 (LIGFALPLFLTSLFLIFLLME), 186–206 (VIALLFIGGAPVYQFIAIVIM), 280–300 (IWVEEMGLLGGVVLLSLFALM), 318–338 (FAGYMCFGFAILILAQVIINV), and 352–372 (LPLISYGGSSLIITLGSLFVV). Residues 383–397 (SKGGESEERKRKSDE) show a composition bias toward basic and acidic residues. Residues 383–406 (SKGGESEERKRKSDESIDDGEALA) are disordered.

It belongs to the SEDS family. FtsW subfamily.

Its subcellular location is the cell inner membrane. The catalysed reaction is [GlcNAc-(1-&gt;4)-Mur2Ac(oyl-L-Ala-gamma-D-Glu-L-Lys-D-Ala-D-Ala)](n)-di-trans,octa-cis-undecaprenyl diphosphate + beta-D-GlcNAc-(1-&gt;4)-Mur2Ac(oyl-L-Ala-gamma-D-Glu-L-Lys-D-Ala-D-Ala)-di-trans,octa-cis-undecaprenyl diphosphate = [GlcNAc-(1-&gt;4)-Mur2Ac(oyl-L-Ala-gamma-D-Glu-L-Lys-D-Ala-D-Ala)](n+1)-di-trans,octa-cis-undecaprenyl diphosphate + di-trans,octa-cis-undecaprenyl diphosphate + H(+). The protein operates within cell wall biogenesis; peptidoglycan biosynthesis. Peptidoglycan polymerase that is essential for cell division. The polypeptide is Probable peptidoglycan glycosyltransferase FtsW (Marinomonas mediterranea (strain ATCC 700492 / JCM 21426 / NBRC 103028 / MMB-1)).